The primary structure comprises 187 residues: Interferon alpha-1/2 (187 aa).

The N-terminal stretch at 1 to 23 (MALPCSFSVALVLLSCHSLCCLA) is a signal peptide. Intrachain disulfides connect Cys24-Cys122 and Cys52-Cys160. Asn101 is a glycosylation site (N-linked (GlcNAc...) asparagine).

It belongs to the alpha/beta interferon family.

The protein localises to the secreted. In terms of biological role, produced by macrophages, IFN-alpha have antiviral activities. Interferon stimulates the production of two enzymes: a protein kinase and an oligoadenylate synthetase. The sequence is that of Interferon alpha-1/2 from Canis lupus familiaris (Dog).